The sequence spans 148 residues: Arginine repressor (148 aa).

This sequence belongs to the ArgR family.

The protein localises to the cytoplasm. The protein operates within amino-acid biosynthesis; L-arginine biosynthesis [regulation]. Functionally, regulates arginine biosynthesis genes. The sequence is that of Arginine repressor from Chlorobium chlorochromatii (strain CaD3).